A 348-amino-acid polypeptide reads, in one-letter code: NADH-ubiquinone oxidoreductase chain 2 (348 aa).

9 helical membrane passes run 1–21 (MSPYITASLLFGLLLGPTITA), 60–80 (FLTQATAAAMLLFASTTNAWL), 96–116 (TLIILALALKIGLAPLHTWLP), 149–169 (NPTLLVILGVLSTLIGGWGGL), 177–194 (ILAYSSIAHLGWMILILQ), 198–220 (TLTLLTLMLYLIMTSSAFLTFIL), 238–258 (ILTSLLPLVLLSLGGLPPLTG), 273–293 (DLAPTATLAALSALLSLYFYL), and 328–348 (MAASSILLLPMTPGILTLFNI).

Belongs to the complex I subunit 2 family.

It is found in the mitochondrion inner membrane. The catalysed reaction is a ubiquinone + NADH + 5 H(+)(in) = a ubiquinol + NAD(+) + 4 H(+)(out). Functionally, core subunit of the mitochondrial membrane respiratory chain NADH dehydrogenase (Complex I) that is believed to belong to the minimal assembly required for catalysis. Complex I functions in the transfer of electrons from NADH to the respiratory chain. The immediate electron acceptor for the enzyme is believed to be ubiquinone. The polypeptide is NADH-ubiquinone oxidoreductase chain 2 (MT-ND2) (Tetraodon nigroviridis (Spotted green pufferfish)).